We begin with the raw amino-acid sequence, 376 residues long: Cysteine synthase 1 (376 aa).

Residues 1–16 constitute a mitochondrion transit peptide; it reads MFRHGVRTFATTSLRR. The residue at position 79 (K79) is an N6-(pyridoxal phosphate)lysine. Pyridoxal 5'-phosphate-binding positions include N109, 215–219, and S314; that span reads GTGGT.

Belongs to the cysteine synthase/cystathionine beta-synthase family. The cofactor is pyridoxal 5'-phosphate.

It is found in the mitochondrion. It carries out the reaction O-succinyl-L-serine + hydrogen sulfide = L-cysteine + succinate. It catalyses the reaction O-acetyl-L-serine + hydrogen sulfide = L-cysteine + acetate. It participates in amino-acid biosynthesis; L-cysteine biosynthesis; L-cysteine from L-serine: step 2/2. Functionally, catalyzes the conversion of O-succinyl-L-serine into cysteine, the last step in the cysteine biosynthesis pathway. Can also use O-acetyl-L-serine. The polypeptide is Cysteine synthase 1 (cys-17) (Neurospora crassa (strain ATCC 24698 / 74-OR23-1A / CBS 708.71 / DSM 1257 / FGSC 987)).